Here is a 117-residue protein sequence, read N- to C-terminus: Protein SMALL AUXIN UP-REGULATED RNA 54 (117 aa).

It belongs to the ARG7 family. Expressed in trichomes. Hardly observed in leaves.

The protein resides in the cell membrane. Its function is as follows. Provide a mechanistic link between auxin and plasma membrane H(+)-ATPases (PM H(+)-ATPases, e.g. AHA1 and AHA2), and triggers PM H(+)-ATPases activity by promoting phosphorylation of their C-terminal autoinhibitory domain as a result of PP2C-D subfamily of type 2C phosphatases inhibition, thus leading to the acidification of the apoplast and the facilitation of solutes and water uptake to drive cell expansion. Triggers plant growth probably by promoting cell elongation. Regulates branch angles and bending. This is Protein SMALL AUXIN UP-REGULATED RNA 54 from Arabidopsis thaliana (Mouse-ear cress).